The primary structure comprises 81 residues: U-poneritoxin(01)-Om2a (81 aa).

A signal peptide spans Met-1–Ala-25. A propeptide spanning residues Ala-26 to Ala-47 is cleaved from the precursor.

Belongs to the formicidae venom precursor-01 superfamily. Truncated sequences of this peptide have also been found in the venom. It is possible they have been cleaved in the venom. In terms of tissue distribution, expressed by the venom gland.

It localises to the secreted. Functionally, cationic amphipathic alpha-helical peptide with antimicrobial activities against E.coli (MIC=6.2 uM), S.aureus (MIC=6.2 uM), and S.cerevisiae (MIC=50 uM). Also shows histamine-releasing activity (30.1% at 10 uM) and a weak hemolytic activity (10.4% at 50 uM). This is U-poneritoxin(01)-Om2a from Odontomachus monticola (Trap-jaw ant).